The primary structure comprises 440 residues: Thymidine phosphorylase (440 aa).

This sequence belongs to the thymidine/pyrimidine-nucleoside phosphorylase family. In terms of assembly, homodimer.

The enzyme catalyses thymidine + phosphate = 2-deoxy-alpha-D-ribose 1-phosphate + thymine. Its pathway is pyrimidine metabolism; dTMP biosynthesis via salvage pathway; dTMP from thymine: step 1/2. Functionally, the enzymes which catalyze the reversible phosphorolysis of pyrimidine nucleosides are involved in the degradation of these compounds and in their utilization as carbon and energy sources, or in the rescue of pyrimidine bases for nucleotide synthesis. The sequence is that of Thymidine phosphorylase from Salmonella agona (strain SL483).